Reading from the N-terminus, the 293-residue chain is Taste receptor type 2 member 143 (293 aa).

Topologically, residues 1–6 (MPSTPT) are extracellular. Residues 7 to 27 (LIFIIIFYLVSLASMLQNGFM) form a helical membrane-spanning segment. The Cytoplasmic segment spans residues 28-55 (MIVLGREWMRNRTLPAADMIVASLASSR). A helical transmembrane segment spans residues 56–76 (FCLHGIAILANLLASFDFCYQ). Topologically, residues 77–79 (ANL) are extracellular. Residues 80 to 100 (IGILWDFTNTLIFWLTAWLAI) traverse the membrane as a helical segment. Over 101 to 127 (FYCVKISSFSHPVLFWLKWRISQLVPR) the chain is Cytoplasmic. Residues 128–148 (LLVVSLIIGGLSAVISATGNF) form a helical membrane-spanning segment. Topologically, residues 149-181 (MANQMTISQGFHGNCTFGHMSLDFYRYYYLYHS) are extracellular. Asn162 carries an N-linked (GlcNAc...) asparagine glycan. Residues 182–202 (VLMWFTPFFLFLVSVIVLMFS) form a helical membrane-spanning segment. At 203 to 227 (LYQHVEKMRGHRPGPWDLHTQAHTM) the chain is on the cytoplasmic side. The helical transmembrane segment at 228–248 (ALKSLTFFFIFYIFFFLALVI) threads the bilayer. The Extracellular segment spans residues 249 to 264 (SSTKRKSMQSYYWARE). A helical membrane pass occupies residues 265–285 (AIIYTGIFLNSIILLFSNPKL). The Cytoplasmic portion of the chain corresponds to 286–293 (RKALKMRF).

This sequence belongs to the G-protein coupled receptor T2R family.

It localises to the membrane. Its function is as follows. Putative taste receptor which may play a role in the perception of bitterness. This chain is Taste receptor type 2 member 143 (Tas2r143), found in Mus musculus (Mouse).